We begin with the raw amino-acid sequence, 285 residues long: Acetyl-coenzyme A carboxylase carboxyl transferase subunit beta (285 aa).

A CoA carboxyltransferase N-terminal domain is found at 29 to 285; that stretch reads IMTKCPKCKK…ILKIHQEVTK (257 aa). Residues Cys33, Cys36, Cys52, and Cys55 each coordinate Zn(2+). The segment at 33-55 adopts a C4-type zinc-finger fold; the sequence is CPKCKKIMYTKELAENLNVCFNC.

This sequence belongs to the AccD/PCCB family. Acetyl-CoA carboxylase is a heterohexamer composed of biotin carboxyl carrier protein (AccB), biotin carboxylase (AccC) and two subunits each of ACCase subunit alpha (AccA) and ACCase subunit beta (AccD). Requires Zn(2+) as cofactor.

It is found in the cytoplasm. The enzyme catalyses N(6)-carboxybiotinyl-L-lysyl-[protein] + acetyl-CoA = N(6)-biotinyl-L-lysyl-[protein] + malonyl-CoA. The protein operates within lipid metabolism; malonyl-CoA biosynthesis; malonyl-CoA from acetyl-CoA: step 1/1. In terms of biological role, component of the acetyl coenzyme A carboxylase (ACC) complex. Biotin carboxylase (BC) catalyzes the carboxylation of biotin on its carrier protein (BCCP) and then the CO(2) group is transferred by the transcarboxylase to acetyl-CoA to form malonyl-CoA. The polypeptide is Acetyl-coenzyme A carboxylase carboxyl transferase subunit beta (Staphylococcus aureus (strain MSSA476)).